The chain runs to 174 residues: Large ribosomal subunit protein uL10 (174 aa).

The protein belongs to the universal ribosomal protein uL10 family. In terms of assembly, part of the ribosomal stalk of the 50S ribosomal subunit. The N-terminus interacts with L11 and the large rRNA to form the base of the stalk. The C-terminus forms an elongated spine to which L12 dimers bind in a sequential fashion forming a multimeric L10(L12)X complex.

In terms of biological role, forms part of the ribosomal stalk, playing a central role in the interaction of the ribosome with GTP-bound translation factors. This is Large ribosomal subunit protein uL10 from Desulfovibrio desulfuricans (strain ATCC 27774 / DSM 6949 / MB).